The sequence spans 378 residues: MQLPSFLEVYKGLISTDSISSTDPSWDHGNEKVIEKMAQWFKDVGFSVEVVEVEPGKHNMVAKMGSGEGGLLLAGHSDTVPFDEGRWNFDPHALTEHNNRFYGLGTADMKGFFAFVYEAAKKMDWSKQTKPLYVLATCDEETTMLGARHFTENAPFKPDYCIIGEPTSLVPIRGHKGHVANAVRVTGKSGHSSDPALGVNAIEIMHEVLFALMQLRDKLVKEYHHPGFAIPSPTLNLGHIHGGDSANRICGCCELHYDVRPLPGISLDGLDNMLRSALKEVEAKWPGRIEITPLHEPIPGYECQHDHPFIGGMESVCETESQTVNYCTEAPFLQELCPTLVLGPGSIDQAHQPDEFLSFDFIDPTIDVLSKSIRKYCF.

His-76 contacts Zn(2+). Residue Asp-78 is part of the active site. Asp-108 provides a ligand contact to Zn(2+). The active site involves Glu-140. The Zn(2+) site is built by Glu-141, Glu-165, and His-351.

The protein belongs to the peptidase M20A family. ArgE subfamily. Homodimer. The cofactor is Zn(2+). It depends on Co(2+) as a cofactor. Glutathione serves as cofactor.

The protein localises to the cytoplasm. It catalyses the reaction N(2)-acetyl-L-ornithine + H2O = L-ornithine + acetate. It participates in amino-acid biosynthesis; L-arginine biosynthesis; L-ornithine from N(2)-acetyl-L-ornithine (linear): step 1/1. Its function is as follows. Catalyzes the hydrolysis of the amide bond of N(2)-acetylated L-amino acids. Cleaves the acetyl group from N-acetyl-L-ornithine to form L-ornithine, an intermediate in L-arginine biosynthesis pathway, and a branchpoint in the synthesis of polyamines. This Vibrio atlanticus (strain LGP32) (Vibrio splendidus (strain Mel32)) protein is Acetylornithine deacetylase.